We begin with the raw amino-acid sequence, 609 residues long: UvrABC system protein C (609 aa).

The 79-residue stretch at 16-94 (SSAGVYRMYD…IKQYMPKYNV (79 aa)) folds into the GIY-YIG domain. The UVR domain maps to 203–238 (QQVISTLVAKMEQAAQQQEYEQAARFRDQIMALRKV).

Belongs to the UvrC family. In terms of assembly, interacts with UvrB in an incision complex.

The protein localises to the cytoplasm. Its function is as follows. The UvrABC repair system catalyzes the recognition and processing of DNA lesions. UvrC both incises the 5' and 3' sides of the lesion. The N-terminal half is responsible for the 3' incision and the C-terminal half is responsible for the 5' incision. The sequence is that of UvrABC system protein C from Shewanella putrefaciens (strain CN-32 / ATCC BAA-453).